The primary structure comprises 385 residues: Tumor protein p53-inducible protein 13 (385 aa).

The signal sequence occupies residues 1-27; that stretch reads MVHPPPPPPRLLLVALVGLLSLREVVA. Topologically, residues 28–301 are extracellular; the sequence is EPAEEAGTPC…ARGPTPRTEE (274 aa). The disordered stretch occupies residues 242 to 297; the sequence is APVSLTTGGPGGNGRSRTEAQMPSGQGNHGGCACPGQVSPAPRAAGPPRVARGPTP. Positions 281 to 297 are enriched in low complexity; the sequence is PAPRAAGPPRVARGPTP. Residues 302–322 traverse the membrane as a helical segment; the sequence is AAWAAMALTFLLVLLTLATLC. Residues 323-385 are Cytoplasmic-facing; that stretch reads TRLHRNFRRS…DSGPDSESSD (63 aa). The span at 359–369 shows a compositional bias: basic residues; the sequence is SRRIKRSRRRP. The interval 359–385 is disordered; sequence SRRIKRSRRRPLLPPTPDSGPDSESSD.

Its subcellular location is the cell membrane. It is found in the cytoplasm. In terms of biological role, may act as a tumor suppressor. Inhibits tumor cell growth, when overexpressed. In Mus musculus (Mouse), this protein is Tumor protein p53-inducible protein 13 (Tp53i13).